The primary structure comprises 326 residues: MAGLNPSQRREVVSLILSLTSNVNISHGDLTPIYERLTNLEASTELLHRSISDISTTVSNISANLQDMTHTLDDVTANLDGLRTTVTALQDSVSILSTNVTDLTNRSSAHAAILSSLQTTVDGNSTAISNLKSDISSNGLAITDLQDRVKSLESTASHGLSFSPPLSVADGVVSLDMDPYFCSQRVSLTSYSAEAQLMQFRWMARGTNGSSDTIDMTVNAHCHGRRTDYMMSSTGNLTVTSNVVLLTFDLSDITHIPSDLARLVPSAGFQAASFPVDVSFTRDSATHAYQAYGVYSSSRVFTITFPTGGDGTANIRSLTVRTGIDT.

The stretch at asparagine 60 to aspartate 80 forms a coiled coil.

This sequence belongs to the orthoreovirus sigma C protein family. Homotrimer.

The protein localises to the virion. In terms of biological role, structural protein responsible for cell attachment. Induces cell apoptosis. In Avian reovirus (strain S1133) (ARV), this protein is Sigma-C capsid protein.